Consider the following 364-residue polypeptide: Nucleoporin SEH1 (364 aa).

6 WD repeats span residues Asp10–Cys49, Thr55–Lys96, Asp111–Gln152, Ser160–Ala210, Thr217–Ser258, and Gly275–Cys314. The interval Asn326 to Gly364 is disordered. Low complexity predominate over residues Gly327–Ala338. A compositionally biased stretch (basic residues) spans Gly355–Gly364.

It belongs to the WD repeat SEC13 family. As to quaternary structure, component of the Nup107-160 subcomplex of the nuclear pore complex (NPC). The Nup107-160 subcomplex includes NUP160, NUP133, NUP107, NUP98, NUP85, NUP43, NUP37, SEH1 and SEC13. Component of the GATOR2 subcomplex, composed of MIOS, SEC13, SEH1L, WDR24 and WDR59. The GATOR2 complex interacts with CASTOR1 and CASTOR2; the interaction is negatively regulated by arginine. The GATOR2 complex interacts with SESN1, SESN2 and SESN3; the interaction is negatively regulated by amino acids.

It localises to the chromosome. It is found in the centromere. The protein localises to the kinetochore. Its subcellular location is the nucleus. The protein resides in the nuclear pore complex. It localises to the lysosome membrane. The GATOR2 complex is negatively regulated by the upstream amino acid sensors CASTOR1 and SESN2, which sequester the GATOR2 complex in absence of amino acids. In the presence of abundant amino acids, GATOR2 is released from CASTOR1 and SESN2 and activated. Component of the Nup107-160 subcomplex of the nuclear pore complex (NPC). The Nup107-160 subcomplex is required for the assembly of a functional NPC. The Nup107-160 subcomplex is also required for normal kinetochore microtubule attachment, mitotic progression and chromosome segregation. This subunit plays a role in recruitment of the Nup107-160 subcomplex to the kinetochore. In terms of biological role, as a component of the GATOR2 complex, functions as an activator of the amino acid-sensing branch of the mTORC1 signaling pathway. The GATOR2 complex indirectly activates mTORC1 through the inhibition of the GATOR1 subcomplex. GATOR2 probably acts as an E3 ubiquitin-protein ligase toward GATOR1. In the presence of abundant amino acids, the GATOR2 complex mediates ubiquitination of the NPRL2 core component of the GATOR1 complex, leading to GATOR1 inactivation. In the absence of amino acids, GATOR2 is inhibited, activating the GATOR1 complex. In Osmerus mordax (Rainbow smelt), this protein is Nucleoporin SEH1 (seh1l).